The sequence spans 195 residues: CD70 antigen (195 aa).

Residues 1 to 23 (MPEEGRPCPWVRWSGTAFQRQWP) are Cytoplasmic-facing. A helical; Signal-anchor for type II membrane protein transmembrane segment spans residues 24–44 (WLLLVVFITVFCCWFHCSGLL). The Extracellular portion of the chain corresponds to 45–195 (SKQQQRLLEH…TFFGVQWICP (151 aa)). In terms of domain architecture, THD spans 58-193 (HTAELQLNLT…DETFFGVQWI (136 aa)). 2 N-linked (GlcNAc...) asparagine glycosylation sites follow: N65 and N116. Cystine bridges form between C117–C153 and C135–C170. N172 carries N-linked (GlcNAc...) asparagine glycosylation.

Belongs to the tumor necrosis factor family. Homotrimer. In terms of processing, N-glycosylated. In terms of tissue distribution, very low level of expression. Detected in splenocytes and thymocytes.

The protein localises to the cell membrane. Its function is as follows. Expressed at the plasma membrane of B cells, it is the ligand of the CD27 receptor which is specifically expressed at the surface of T cells. The CD70-CD27 signaling pathway mediates antigen-specific T cell activation and expansion which in turn provides immune surveillance of B cells. This chain is CD70 antigen, found in Mus musculus (Mouse).